Here is a 125-residue protein sequence, read N- to C-terminus: UPF0102 protein PBPRA3228 (125 aa).

It belongs to the UPF0102 family.

The sequence is that of UPF0102 protein PBPRA3228 from Photobacterium profundum (strain SS9).